A 116-amino-acid polypeptide reads, in one-letter code: CDKN2AIP N-terminal-like protein (116 aa).

N-acetylmethionine is present on methionine 1. Residues 24-116 (AEQFRSYSES…RSELMKKHQS (93 aa)) enclose the XRN2-binding (XTBD) domain.

Belongs to the CARF family. In terms of assembly, interacts with XRN2; the interaction is direct.

This Rattus norvegicus (Rat) protein is CDKN2AIP N-terminal-like protein (Cdkn2aipnl).